A 501-amino-acid polypeptide reads, in one-letter code: Glycerol kinase 1 (501 aa).

Thr-16 serves as a coordination point for ADP. Residues Thr-16, Thr-17, and Ser-18 each coordinate ATP. Residue Thr-16 participates in sn-glycerol 3-phosphate binding. ADP is bound at residue Arg-20. Arg-84, Glu-85, Tyr-135, and Asp-242 together coordinate sn-glycerol 3-phosphate. Residues Arg-84, Glu-85, Tyr-135, Asp-242, and Gln-243 each contribute to the glycerol site. ADP is bound by residues Thr-264 and Gly-307. 4 residues coordinate ATP: Thr-264, Gly-307, Gln-311, and Gly-408. Gly-408 provides a ligand contact to ADP.

The protein belongs to the FGGY kinase family.

The enzyme catalyses glycerol + ATP = sn-glycerol 3-phosphate + ADP + H(+). It functions in the pathway polyol metabolism; glycerol degradation via glycerol kinase pathway; sn-glycerol 3-phosphate from glycerol: step 1/1. Key enzyme in the regulation of glycerol uptake and metabolism. Catalyzes the phosphorylation of glycerol to yield sn-glycerol 3-phosphate. The polypeptide is Glycerol kinase 1 (Saccharolobus solfataricus (strain ATCC 35092 / DSM 1617 / JCM 11322 / P2) (Sulfolobus solfataricus)).